The following is a 400-amino-acid chain: Protein phosphatase methylesterase 1 (400 aa).

The tract at residues 32–70 (DENDGDALGSLPSFNGQSNRNRKYTGKTGSTTDRISSKE) is disordered. The AB hydrolase-1 domain occupies 114-365 (PIFIFHHGAG…DSGHFIQEDS (252 aa)). Catalysis depends on residues serine 205, aspartate 233, and histidine 359.

Belongs to the AB hydrolase superfamily. In terms of assembly, interacts with and inactivates the phosphatase PP2A-like catalytic subunits PPG1, PPH21, PPH22, PPH3 and SIT4.

The enzyme catalyses [phosphatase 2A protein]-C-terminal L-leucine methyl ester + H2O = [phosphatase 2A protein]-C-terminal L-leucine + methanol + H(+). Functionally, demethylates proteins that have been reversibly carboxymethylated. Demethylates the phosphatase PP2A catalytic subunits PPH21 and PPH22. Forms inactive complexes (PP2Ai) with phosphatase PP2A-like catalytic subunits. Involved in the regulation of cell cycle progression at START. The polypeptide is Protein phosphatase methylesterase 1 (PPE1) (Saccharomyces cerevisiae (strain ATCC 204508 / S288c) (Baker's yeast)).